We begin with the raw amino-acid sequence, 444 residues long: UDP-N-acetylmuramate--L-alanine ligase (444 aa).

Residue 110-116 (GAHGKTS) participates in ATP binding.

Belongs to the MurCDEF family.

Its subcellular location is the cytoplasm. The catalysed reaction is UDP-N-acetyl-alpha-D-muramate + L-alanine + ATP = UDP-N-acetyl-alpha-D-muramoyl-L-alanine + ADP + phosphate + H(+). It participates in cell wall biogenesis; peptidoglycan biosynthesis. Its function is as follows. Cell wall formation. The sequence is that of UDP-N-acetylmuramate--L-alanine ligase from Streptococcus pneumoniae (strain ATCC 700669 / Spain 23F-1).